Here is a 925-residue protein sequence, read N- to C-terminus: Calpain-B (925 aa).

Residues Met259–Ser558 form the Calpain catalytic domain. Residues Cys314, His470, and Asn498 contribute to the active site. The interval Pro559–Asp728 is domain III. Residues Met723 to Asp753 form a disordered region. The linker stretch occupies residues Glu729–Pro748. Residues Lys749–Ser925 are domain IV. EF-hand domains follow at residues Phe796–Trp831 and Thr826–His861. Ca(2+)-binding residues include Asp809, Asp811, Ser813, Arg815, Glu820, Asp839, Thr843, Ser845, and His850.

This sequence belongs to the peptidase C2 family. Undergoes calcium-dependent autolytic cleavage between Asn-74 and Ala-75 and between Gln-224 and Asn-225 to produce two major products, calpain B catalytic subunit 1 and calpain B catalytic subunit 2. This autolysis is necessary for activation of the protein. As to expression, strongly expressed in follicular and border cells of the oocyte. Ubiquitously expressed in early embryos. Localized to the trachea and their orifices, and to the larynx of late embryos. Restricted to the salivary gland in third instar larvae.

The protein localises to the cytoplasm. It is found in the membrane. Its activity is regulated as follows. Activated by millimolar concentrations of calcium. In terms of biological role, calcium-regulated non-lysosomal thiol-protease. This is Calpain-B from Drosophila melanogaster (Fruit fly).